Here is a 226-residue protein sequence, read N- to C-terminus: 2,3-bisphosphoglycerate-dependent phosphoglycerate mutase (226 aa).

Substrate contacts are provided by residues 8–15 (RHGQSVWN), 21–22 (TG), Arg-58, 109–112 (ERMY), Lys-120, 136–137 (RR), and 180–181 (GN). His-9 acts as the Tele-phosphohistidine intermediate in catalysis. Residue Glu-109 is the Proton donor/acceptor of the active site.

The protein belongs to the phosphoglycerate mutase family. BPG-dependent PGAM subfamily.

The enzyme catalyses (2R)-2-phosphoglycerate = (2R)-3-phosphoglycerate. The protein operates within carbohydrate degradation; glycolysis; pyruvate from D-glyceraldehyde 3-phosphate: step 3/5. Catalyzes the interconversion of 2-phosphoglycerate and 3-phosphoglycerate. The chain is 2,3-bisphosphoglycerate-dependent phosphoglycerate mutase from Chlamydia trachomatis serovar L2b (strain UCH-1/proctitis).